The sequence spans 287 residues: ATP synthase gamma chain (287 aa).

This sequence belongs to the ATPase gamma chain family. F-type ATPases have 2 components, CF(1) - the catalytic core - and CF(0) - the membrane proton channel. CF(1) has five subunits: alpha(3), beta(3), gamma(1), delta(1), epsilon(1). CF(0) has three main subunits: a, b and c. The F(1)F(0) complex interacts with SpoIIIJ and YqjG; YqgA is found in the same complex. Interacts with FloT.

The protein localises to the cell membrane. It is found in the membrane raft. Functionally, produces ATP from ADP in the presence of a proton gradient across the membrane. The gamma chain is believed to be important in regulating ATPase activity and the flow of protons through the CF(0) complex. In Bacillus subtilis (strain 168), this protein is ATP synthase gamma chain.